Reading from the N-terminus, the 262-residue chain is Sulfur carrier protein FdhD (262 aa).

Cys-107 (cysteine persulfide intermediate) is an active-site residue.

It belongs to the FdhD family.

The protein resides in the cytoplasm. Its function is as follows. Required for formate dehydrogenase (FDH) activity. Acts as a sulfur carrier protein that transfers sulfur from IscS to the molybdenum cofactor prior to its insertion into FDH. In Bacillus pumilus (strain SAFR-032), this protein is Sulfur carrier protein FdhD.